A 752-amino-acid chain; its full sequence is MEDSGESMTGMLDSKSPESGDSPAMEGTTGTDDVTGLSTSDLTTEQPPESQEQTQPVSDMEFSVEHLKTAVQNIDQSASPAEPAAENSEQPPESNGQQEDQSEQPDDVKEAGQGDSESPSNMELEDAPKEPAEPAAEADPAAPQEPELPTEYERLSKVVEDNPEDFNGWVYLLQYVEQENHLLGSRKAFDAFFLHYPYCYGYWKKYADIERKHGYIQMADEVYRRGLQAIPLSVDLWLHYITFLRENQDTSDGEAESRIRASYEHAVLACGTDFRSDRLWEAYIAWETEQGKLANVTAIYDRLLCIPTQLYSQHFQKFKDHVQSNNPKHFLSEEEFVSLRVELANANKPSGDEDAETEAPGEELPPGTEDLPDPAKRVTEIENMRHKVIETRQEMFNHNEHEVSKRWAFEEGIKRPYFHVKALEKTQLNNWREYLDFELENGTPERVVVLFERCLIACALYEEFWIKYAKYLESYSTEAVRHIYKKACTVHLPKKPNVHLLWAAFEEQQGSIDEARSILKAVEVSVPGLAMVRLRRVSLERRHGNMEEAEALLQDAITNGRNSSESSFYSVKLARQLVKVQKSIGRAKKVLLEAVEKDETNPKLYLNLLELEYSGDVQQNEAEIIACFDRALSSSMALESRITFSQRKVDFLEDFGSDINTLMAAYEQHQRLLAEQESFKRKAENGSEEPDAKRQRTDDQSVASGQMMDMQANHAGYNYNNWYQYNSWGSQNSWGQYGQYGQYNQYYPPPPT.

The interval 1–148 is disordered; it reads MEDSGESMTG…DPAAPQEPEL (148 aa). Residues 28–42 show a composition bias toward polar residues; the sequence is TTGTDDVTGLSTSDL. Composition is skewed to low complexity over residues 43–56, 76–94, and 133–148; these read TTEQPPESQEQTQP, QSASPAEPAAENSEQPPES, and EPAAEADPAAPQEPEL. HAT repeat units lie at residues 180 to 212, 214 to 246, and 254 to 289; these read NHLLGSRKAFDAFFLHYPYCYGYWKKYADIERK, GYIQMADEVYRRGLQAIPLSVDLWLHYITFLRE, and EAESRIRASYEHAVLACGTDFRSDRLWEAYIAWETE. Positions 347–374 are disordered; it reads NKPSGDEDAETEAPGEELPPGTEDLPDP. Positions 352-361 are enriched in acidic residues; it reads DEDAETEAPG. 2 HAT repeats span residues 408–440 and 442–474; these read AFEEGIKRPYFHVKALEKTQLNNWREYLDFELE and GTPERVVVLFERCLIACALYEEFWIKYAKYLES. Residues 678-699 are compositionally biased toward basic and acidic residues; it reads SFKRKAENGSEEPDAKRQRTDD. The disordered stretch occupies residues 678–703; sequence SFKRKAENGSEEPDAKRQRTDDQSVA. An HAT 6 repeat occupies 700-731; that stretch reads QSVASGQMMDMQANHAGYNYNNWYQYNSWGSQ.

The protein belongs to the PRP39 family.

It is found in the nucleus. In terms of biological role, involved in pre-mRNA splicing. This Danio rerio (Zebrafish) protein is Pre-mRNA-processing factor 39 (prpf39).